The following is a 553-amino-acid chain: Arginine--tRNA ligase (553 aa).

Residues Ala130–Gly140 carry the 'HIGH' region motif.

It belongs to the class-I aminoacyl-tRNA synthetase family. Monomer.

Its subcellular location is the cytoplasm. It catalyses the reaction tRNA(Arg) + L-arginine + ATP = L-arginyl-tRNA(Arg) + AMP + diphosphate. This is Arginine--tRNA ligase from Saccharopolyspora erythraea (strain ATCC 11635 / DSM 40517 / JCM 4748 / NBRC 13426 / NCIMB 8594 / NRRL 2338).